Consider the following 141-residue polypeptide: Ribonuclease P protein component (141 aa).

Disordered regions lie at residues 37 to 56 and 114 to 141; these read RTEE…VGFT and RRIT…VNGK. Basic and acidic residues predominate over residues 114–123; the sequence is RRITAKGERR.

This sequence belongs to the RnpA family. As to quaternary structure, consists of a catalytic RNA component (M1 or rnpB) and a protein subunit.

It carries out the reaction Endonucleolytic cleavage of RNA, removing 5'-extranucleotides from tRNA precursor.. Its function is as follows. RNaseP catalyzes the removal of the 5'-leader sequence from pre-tRNA to produce the mature 5'-terminus. It can also cleave other RNA substrates such as 4.5S RNA. The protein component plays an auxiliary but essential role in vivo by binding to the 5'-leader sequence and broadening the substrate specificity of the ribozyme. This Brucella suis biovar 1 (strain 1330) protein is Ribonuclease P protein component.